A 694-amino-acid chain; its full sequence is Cyclic nucleotide-gated ion channel 4 (694 aa).

Basic and acidic residues predominate over residues methionine 1 to arginine 15. The segment at methionine 1–arginine 64 is disordered. At methionine 1–lysine 92 the chain is on the cytoplasmic side. Acidic residues predominate over residues serine 24–aspartate 53. The chain crosses the membrane as a helical span at residues valine 93–serine 113. Residues valine 114–tryptophan 126 are Extracellular-facing. Residues leucine 127 to tryptophan 147 form a helical membrane-spanning segment. Residues isoleucine 148–asparagine 187 are Cytoplasmic-facing. Residues glycine 188–isoleucine 208 traverse the membrane as a helical segment. Residues proline 209–serine 216 are Extracellular-facing. Residues valine 217–tyrosine 237 traverse the membrane as a helical segment. At histidine 238 to glycine 251 the chain is on the cytoplasmic side. A helical membrane pass occupies residues tyrosine 252–alanine 272. Residues histidine 273 to valine 392 are Extracellular-facing. The helical transmembrane segment at valine 393–isoleucine 413 threads the bilayer. At lysine 414 to tyrosine 694 the chain is on the cytoplasmic side. Residues leucine 496–tyrosine 626 and aspartate 565 each bind a nucleoside 3',5'-cyclic phosphate. The tract at residues phenylalanine 610–tyrosine 626 is calmodulin-binding. Positions arginine 631 to arginine 660 constitute an IQ domain.

The protein belongs to the cyclic nucleotide-gated cation channel (TC 1.A.1.5) family. As to quaternary structure, homotetramer or heterotetramer.

It is found in the cell membrane. Its function is as follows. Acts as a cyclic nucleotide-gated ion channel. Permeable to potassium and sodium in a cyclic nucleotide-dependent fashion (cAMP or cGMP). Might constitute a common downstream component of the signaling pathways leading to hypersensitive response (HR). The protein is Cyclic nucleotide-gated ion channel 4 (CNGC4) of Arabidopsis thaliana (Mouse-ear cress).